Reading from the N-terminus, the 309-residue chain is uncharacterized protein (309 aa).

A helical membrane pass occupies residues 23 to 43 (ALVLSSIVNILLLLLIYSTVF).

Belongs to the chlamydial CPn_0593/CT_474/TC_0759 family.

The protein localises to the membrane. This is an uncharacterized protein from Chlamydia trachomatis serovar D (strain ATCC VR-885 / DSM 19411 / UW-3/Cx).